An 836-amino-acid chain; its full sequence is Serine/threonine-protein kinase ppk5 (836 aa).

Disordered regions lie at residues 1–29, 192–214, 230–307, and 328–381; these read MVGL…FLSP, INQL…TLSS, CSQF…YKSI, and TPLD…ERQN. Composition is skewed to polar residues over residues 192–205, 232–241, and 265–288; these read INQL…TNYP, QFASPRSSIV, and KPSN…TKLT. Over residues 289 to 298 the composition is skewed to basic and acidic residues; the sequence is SQRDNDHQKD. Residues 338 to 347 are compositionally biased toward basic residues; the sequence is SGKKFNKNSK. The span at 353 to 362 shows a compositional bias: low complexity; that stretch reads STISSYSSAS. Residues 518–814 enclose the Protein kinase domain; sequence YEIIDTVGKG…VDSALQHEFI (297 aa). ATP contacts are provided by residues 524-532 and lysine 547; that span reads VGKGSFGQV. The active-site Proton acceptor is the aspartate 644. At tyrosine 678 the chain carries Phosphotyrosine.

This sequence belongs to the protein kinase superfamily. CMGC Ser/Thr protein kinase family. MNB/DYRK subfamily.

The protein resides in the cytoplasm. The enzyme catalyses L-seryl-[protein] + ATP = O-phospho-L-seryl-[protein] + ADP + H(+). It carries out the reaction L-threonyl-[protein] + ATP = O-phospho-L-threonyl-[protein] + ADP + H(+). Has a role in meiosis. The protein is Serine/threonine-protein kinase ppk5 (ppk5) of Schizosaccharomyces pombe (strain 972 / ATCC 24843) (Fission yeast).